A 455-amino-acid polypeptide reads, in one-letter code: MWLEILLTSVLGFAIYWFISRDKEETLPLEDGWWGPGTRSAAREDDSIRPFKVETSDEEIHDLHQRIDKFRFTPPLEDSCFHYGFNSNYLKKVISYWRNEFDWKKQVEILNRYPHFKTKIEGLDIHFIHVKPPQLPAGHTPKPLLMVHGWPGSFYEFYKIIPLLTDPKNHGLSDEHVFEVICPSIPGYGFSEASSKKGFNSVATARIFYKLMLRLGFQEFYIQGGDWGSLICTNMAQLVPSHVKGLHLNMALVLSNFSTLTLLLGQRFGRFLGLTERDVELLYPVKEKVFYSLMRESGYMHIQCTKPDTVGSALNDSPVGLAAYILEKFSTWTNTEFRYLEDGGLERKFSLDDLLTNVMLYWTTGTIISSQRFYKENLGQGWMTQKHERMKVYVPTGFSAFPFELLHTPEKWVRFKYPKLISYSYMVRGGHFAAFEEPELLAQDIRKFLSVLERQ.

Residues 1–21 (MWLEILLTSVLGFAIYWFISR) traverse the membrane as a helical; Signal-anchor for type III membrane protein segment. At 22–455 (DKEETLPLED…RKFLSVLERQ (434 aa)) the chain is on the cytoplasmic side. D226 (nucleophile) is an active-site residue. R295 carries the dimethylated arginine modification. Y374 (proton donor) is an active-site residue. The active-site Proton acceptor is H431.

It belongs to the peptidase S33 family. As to expression, found in liver.

Its subcellular location is the microsome membrane. It is found in the endoplasmic reticulum membrane. It catalyses the reaction cis-stilbene oxide + H2O = (1R,2R)-hydrobenzoin. It carries out the reaction 1-(4-methoxyphenyl)-N-methyl-N-[(3-methyloxetan-3-yl)methyl]methanamine + H2O = 2-{[(4-methoxybenzyl)(methyl)amino]methyl}-2-methylpropane-1,3-diol. The catalysed reaction is 8,9-epoxy-(5Z,11Z,14Z)-eicosatrienoate + H2O = 8,9-dihydroxy-(5Z,11Z,14Z)-eicosatrienoate. The enzyme catalyses 11,12-epoxy-(5Z,8Z,14Z)-eicosatrienoate + H2O = 11,12-dihydroxy-(5Z,8Z,14Z)-eicosatrienoate. It catalyses the reaction 2-(5Z,8Z,11Z,14Z-eicosatetraenoyl)-glycerol + H2O = glycerol + (5Z,8Z,11Z,14Z)-eicosatetraenoate + H(+). Inhibited by 10-hydroxystearamide and methoxy-arachidonyl fluorophosphate. Biotransformation enzyme that catalyzes the hydrolysis of arene and aliphatic epoxides to less reactive and more water soluble dihydrodiols by the trans addition of water. Plays a role in the metabolism of endogenous lipids such as epoxide-containing fatty acids. Metabolizes the abundant endocannabinoid 2-arachidonoylglycerol (2-AG) to free arachidonic acid (AA) and glycerol. Binds 20(S)-hydroxycholesterol (20(S)-OHC). This chain is Epoxide hydrolase 1, found in Homo sapiens (Human).